The chain runs to 299 residues: Taste receptor type 2 member 19 (299 aa).

Position 1 (methionine 1) is a topological domain, extracellular. Residues 2–22 (MCFLLIILSILVVFAFVLGNF) form a helical membrane-spanning segment. Residues 23 to 55 (SNGFIALVNVIDWVNTRKISSADQILTALVVSR) lie on the Cytoplasmic side of the membrane. Residues 56–76 (IGLLWVMLFLWYATVFNSALY) traverse the membrane as a helical segment. At 77–87 (GLEVRIVASNA) the chain is on the extracellular side. The chain crosses the membrane as a helical span at residues 88 to 108 (WAVMNHFSIWLAASLSIFCLL). Topologically, residues 109 to 127 (KIANFSNLIFLHLKKRIKS) are cytoplasmic. Residues 128-148 (VVLVILLGPLVFLICNLAVIT) traverse the membrane as a helical segment. Over 149–181 (MDERVWTKEYEGNVTWKIKLRNAIQLSSLTVTT) the chain is Extracellular. N-linked (GlcNAc...) asparagine glycosylation occurs at asparagine 161. Residues 182-202 (LANLIPFTLSLICFLLLICSL) form a helical membrane-spanning segment. Topologically, residues 203–226 (CKHLKKMRLHSKGSQDPSTKVHIK) are cytoplasmic. The chain crosses the membrane as a helical span at residues 227 to 247 (ALQTVTSFLMLFAIYFLCIIT). Residues 248 to 259 (STWNLRTQQSKL) are Extracellular-facing. The helical transmembrane segment at 260–280 (VLLLCQTVAIMYPSFHSFILI) threads the bilayer. Topologically, residues 281 to 299 (MGSRKLKQTFLSVLWQMTR) are cytoplasmic.

The protein belongs to the G-protein coupled receptor T2R family.

It localises to the membrane. In terms of biological role, receptor that may play a role in the perception of bitterness and is gustducin-linked. May play a role in sensing the chemical composition of the gastrointestinal content. The activity of this receptor may stimulate alpha gustducin, mediate PLC-beta-2 activation and lead to the gating of TRPM5. This chain is Taste receptor type 2 member 19 (TAS2R19), found in Pan paniscus (Pygmy chimpanzee).